Reading from the N-terminus, the 318-residue chain is Galactofuranose-binding protein YtfQ (318 aa).

An N-terminal signal peptide occupies residues 1-21 (MWKRLLIVSAVSAAMSSMALA). Beta-D-galactofuranose-binding positions include 34–38 (ESGWR), 111–112 (DR), arginine 167, asparagine 220, and aspartate 248. Residues cysteine 150 and cysteine 214 are joined by a disulfide bond.

Belongs to the bacterial solute-binding protein 2 family. As to quaternary structure, the complex is composed of two ATP-binding proteins (YtfR), two transmembrane proteins (YtfT and YjfF) and a solute-binding protein (YtfQ).

It localises to the periplasm. Its function is as follows. Part of the ABC transporter complex YtfQRT-YjfF involved in galactofuranose transport. Binds to both alpha- and beta-galactofuranose. The polypeptide is Galactofuranose-binding protein YtfQ (ytfQ) (Escherichia coli (strain K12)).